The following is a 132-amino-acid chain: Neurophysin 2 (132 aa).

Cystine bridges form between cysteine 10–cysteine 54, cysteine 13–cysteine 27, cysteine 21–cysteine 44, cysteine 28–cysteine 34, cysteine 61–cysteine 73, cysteine 67–cysteine 85, and cysteine 74–cysteine 79.

It belongs to the vasopressin/oxytocin family.

The protein localises to the secreted. Its function is as follows. Neurophysin 2 specifically binds vasopressin. This chain is Neurophysin 2, found in Struthio camelus (Common ostrich).